A 212-amino-acid chain; its full sequence is Prolactin (212 aa).

The first 24 residues, 1-24 (MAHRETNGSKLFITVLCMVAACSA), serve as a signal peptide directing secretion. 2 disulfide bridges follow: Cys-70/Cys-185 and Cys-202/Cys-212.

It belongs to the somatotropin/prolactin family.

It localises to the secreted. The chain is Prolactin (prl) from Sparus aurata (Gilthead sea bream).